Here is a 718-residue protein sequence, read N- to C-terminus: Polyribonucleotide nucleotidyltransferase (718 aa).

Mg(2+) contacts are provided by aspartate 493 and aspartate 499. The KH domain maps to 560–619; that stretch reads PRVIKKQIDPDKIRNVIGPGGKMINKIIDETGVKIDIEPDGLIYISSSDAEQAEQAIKAI. Residues 629–697 form the S1 motif domain; that stretch reads GEVYLGKVVR…ERGRINLSRK (69 aa). Residues 695 to 718 form a disordered region; that stretch reads SRKQALGEEDGKTNNDDKKSTKKT. Residues 699 to 718 show a composition bias toward basic and acidic residues; that stretch reads ALGEEDGKTNNDDKKSTKKT.

It belongs to the polyribonucleotide nucleotidyltransferase family. Requires Mg(2+) as cofactor.

Its subcellular location is the cytoplasm. It carries out the reaction RNA(n+1) + phosphate = RNA(n) + a ribonucleoside 5'-diphosphate. Involved in mRNA degradation. Catalyzes the phosphorolysis of single-stranded polyribonucleotides processively in the 3'- to 5'-direction. This chain is Polyribonucleotide nucleotidyltransferase, found in Natranaerobius thermophilus (strain ATCC BAA-1301 / DSM 18059 / JW/NM-WN-LF).